Here is a 565-residue protein sequence, read N- to C-terminus: Periplasmic trehalase (565 aa).

The signal sequence occupies residues 1–30; sequence MKSPAPSRPQKMALIPACIFLCFAALSVQA. Residues Arg-152, 159–160, Asn-196, 205–207, 277–279, and Gly-310 contribute to the substrate site; these read WD, RSQ, and RPE. Active-site proton donor/acceptor residues include Asp-312 and Glu-496. Glu-511 serves as a coordination point for substrate. Residues 539-565 are disordered; the sequence is CDNVPATRPLSESTTQPVKQKEAEPTP.

Belongs to the glycosyl hydrolase 37 family. In terms of assembly, monomer.

It is found in the periplasm. It catalyses the reaction alpha,alpha-trehalose + H2O = alpha-D-glucose + beta-D-glucose. Functionally, provides the cells with the ability to utilize trehalose at high osmolarity by splitting it into glucose molecules that can subsequently be taken up by the phosphotransferase-mediated uptake system. This chain is Periplasmic trehalase, found in Escherichia coli O17:K52:H18 (strain UMN026 / ExPEC).